We begin with the raw amino-acid sequence, 141 residues long: 3-hydroxyacyl-[acyl-carrier-protein] dehydratase FabZ (141 aa).

His48 is an active-site residue.

It belongs to the thioester dehydratase family. FabZ subfamily.

It is found in the cytoplasm. It carries out the reaction a (3R)-hydroxyacyl-[ACP] = a (2E)-enoyl-[ACP] + H2O. Involved in unsaturated fatty acids biosynthesis. Catalyzes the dehydration of short chain beta-hydroxyacyl-ACPs and long chain saturated and unsaturated beta-hydroxyacyl-ACPs. In Streptococcus thermophilus (strain CNRZ 1066), this protein is 3-hydroxyacyl-[acyl-carrier-protein] dehydratase FabZ.